The primary structure comprises 154 residues: 6,7-dimethyl-8-ribityllumazine synthase (154 aa).

5-amino-6-(D-ribitylamino)uracil is bound by residues tryptophan 22, 56 to 58, and 80 to 82; these read AWE and CVV. 85-86 lines the (2S)-2-hydroxy-3-oxobutyl phosphate pocket; the sequence is DT. Catalysis depends on histidine 88, which acts as the Proton donor. Asparagine 113 serves as a coordination point for 5-amino-6-(D-ribitylamino)uracil. A (2S)-2-hydroxy-3-oxobutyl phosphate-binding site is contributed by arginine 127.

The protein belongs to the DMRL synthase family. As to quaternary structure, forms an icosahedral capsid composed of 60 subunits, arranged as a dodecamer of pentamers.

The catalysed reaction is (2S)-2-hydroxy-3-oxobutyl phosphate + 5-amino-6-(D-ribitylamino)uracil = 6,7-dimethyl-8-(1-D-ribityl)lumazine + phosphate + 2 H2O + H(+). It functions in the pathway cofactor biosynthesis; riboflavin biosynthesis; riboflavin from 2-hydroxy-3-oxobutyl phosphate and 5-amino-6-(D-ribitylamino)uracil: step 1/2. In terms of biological role, catalyzes the formation of 6,7-dimethyl-8-ribityllumazine by condensation of 5-amino-6-(D-ribitylamino)uracil with 3,4-dihydroxy-2-butanone 4-phosphate. This is the penultimate step in the biosynthesis of riboflavin. The protein is 6,7-dimethyl-8-ribityllumazine synthase of Xylella fastidiosa (strain M23).